A 309-amino-acid chain; its full sequence is Foldase protein PrsA (309 aa).

An N-terminal signal peptide occupies residues 1 to 22; it reads MKTRSKLAAGFLTLMSVATLAA. A lipid anchor (N-palmitoyl cysteine) is attached at C23. C23 carries S-diacylglycerol cysteine lipidation. The 96-residue stretch at 146–241 folds into the PpiC domain; that stretch reads TPETSVQVIK…TSYYIIKVTD (96 aa).

The protein belongs to the PrsA family.

It is found in the cell membrane. It catalyses the reaction [protein]-peptidylproline (omega=180) = [protein]-peptidylproline (omega=0). Its function is as follows. Plays a major role in protein secretion by helping the post-translocational extracellular folding of several secreted proteins. The sequence is that of Foldase protein PrsA from Streptococcus agalactiae serotype III (strain NEM316).